Reading from the N-terminus, the 275-residue chain is Elongation factor Ts (275 aa).

The segment at 80–83 (TDFV) is involved in Mg(2+) ion dislocation from EF-Tu.

This sequence belongs to the EF-Ts family.

The protein resides in the cytoplasm. In terms of biological role, associates with the EF-Tu.GDP complex and induces the exchange of GDP to GTP. It remains bound to the aminoacyl-tRNA.EF-Tu.GTP complex up to the GTP hydrolysis stage on the ribosome. This chain is Elongation factor Ts, found in Kineococcus radiotolerans (strain ATCC BAA-149 / DSM 14245 / SRS30216).